The chain runs to 233 residues: tRNA (guanine-N(1)-)-methyltransferase (233 aa).

S-adenosyl-L-methionine is bound by residues Gly-113 and 133-138; that span reads IGDYVL.

The protein belongs to the RNA methyltransferase TrmD family. In terms of assembly, homodimer.

The protein localises to the cytoplasm. The enzyme catalyses guanosine(37) in tRNA + S-adenosyl-L-methionine = N(1)-methylguanosine(37) in tRNA + S-adenosyl-L-homocysteine + H(+). Functionally, specifically methylates guanosine-37 in various tRNAs. The polypeptide is tRNA (guanine-N(1)-)-methyltransferase (Ruminiclostridium cellulolyticum (strain ATCC 35319 / DSM 5812 / JCM 6584 / H10) (Clostridium cellulolyticum)).